We begin with the raw amino-acid sequence, 238 residues long: Purine nucleoside phosphorylase DeoD-type (238 aa).

Histidine 4 is an a purine D-ribonucleoside binding site. Residues glycine 20, arginine 24, arginine 43, and 87–90 each bind phosphate; that span reads RVGS. A purine D-ribonucleoside-binding positions include 179–181 and 203–204; these read EME and SD. Aspartate 204 acts as the Proton donor in catalysis.

Belongs to the PNP/UDP phosphorylase family. Homohexamer; trimer of homodimers.

It catalyses the reaction a purine D-ribonucleoside + phosphate = a purine nucleobase + alpha-D-ribose 1-phosphate. The catalysed reaction is a purine 2'-deoxy-D-ribonucleoside + phosphate = a purine nucleobase + 2-deoxy-alpha-D-ribose 1-phosphate. In terms of biological role, catalyzes the reversible phosphorolytic breakdown of the N-glycosidic bond in the beta-(deoxy)ribonucleoside molecules, with the formation of the corresponding free purine bases and pentose-1-phosphate. This Actinobacillus succinogenes (strain ATCC 55618 / DSM 22257 / CCUG 43843 / 130Z) protein is Purine nucleoside phosphorylase DeoD-type.